The following is an 835-amino-acid chain: Cell division control protein 48 (835 aa).

The tract at residues 1-21 is disordered; that stretch reads MGEEHKPLLDASGVDPREEDK. ATP is bound at residue 257 to 263; the sequence is PGTGKTL. Residues K305, K322, and K346 each participate in a glycyl lysine isopeptide (Lys-Gly) (interchain with G-Cter in ubiquitin) cross-link. ATP contacts are provided by N358 and H394. Residues S472 and S519 each carry the phosphoserine modification. K522 is covalently cross-linked (Glycyl lysine isopeptide (Lys-Gly) (interchain with G-Cter in ubiquitin)). 531 to 536 provides a ligand contact to ATP; that stretch reads GTGKTL. Residues K539, K594, and K673 each participate in a glycyl lysine isopeptide (Lys-Gly) (interchain with G-Cter in ubiquitin) cross-link. The segment covering 720–729 has biased composition (basic and acidic residues); it reads EAEKEVKVEG. Residues 720–746 form a disordered region; the sequence is EAEKEVKVEGEDVEMTDEGAKAEQEPE. Phosphothreonine is present on T735. Phosphoserine is present on S770. The disordered stretch occupies residues 792-835; that stretch reads SNFNFNDAPLGTTATDNANSNNSAPSGAGAAFGSNAEEDDDLYS. The segment covering 802-826 has biased composition (low complexity); that stretch reads GTTATDNANSNNSAPSGAGAAFGSN.

The protein belongs to the AAA ATPase family. In terms of assembly, component of the heterotrimeric CDC48-NPL4-UFD1 ATPase complex. The CDC48-NPL4-UFD1 ATPase complex interacts with the HRD1 ubiquitin ligase complex composed of the E3 ligase HRD1, its cofactors HRD3, USA1 and DER1, substrate recruiting factor YOS9 and CDC48-binding protein UBX2. Interaction between the complexes is mediated by interaction between CDC48-NPL4-UFD1 complex member CDC48 and HRD1 complex member UBX2. Forms a complex composed of CDC48, NPL4, UFD1, UFD2 and SHP1. Forms a complex composed of CDC48, NPL4, UFD1, DOA1, SHP1 and deubiquitinase OTU1; within the complex interacts with DOA1/UFD3 and OTU1 to prevent multiubiquitination of substrates. Interacts with UFD2, to add further ubiquitin moieties; the interaction with UFD2 is prevented by DOA1/UFD3. Forms a complex composed of CDC48, DOA1, deubiquitinase UBP3 and probably BRE5; within the complex interacts with DOA1 and UBP3. Interacts (via C-terminus) with DOA1 (via PUL domain); the interaction is direct. Interacts with NPL4. Interacts with SHP1/UBX1, UBX2, UBX3, UBX4, UBX5, UBX6 and UBX7. Interacts with VMS1; the interaction recruits CDC48 to the mitochondria in response to mitochondrial stress. Component of the ribosome quality control complex (RQC), composed of the E3 ubiquitin ligase RKR1/LTN1, RQC1 and RQC2, as well as CDC48 and its ubiquitin-binding cofactors. RQC forms a stable complex with 60S ribosomal subunits. Interacts with ASE1 and CDC5; the interaction is likely to result in their degradation. Component of the DSCc E3 ligase complexes composed of at least TUL1, DSC2, DSC3, UBX3, CDC48 as well as VLD1 for the vacuole-localized complex or GLD1 for the Golgi/endosome-localized complex.

It localises to the microsome. Its subcellular location is the endoplasmic reticulum. The protein localises to the cytoplasm. It catalyses the reaction ATP + H2O = ADP + phosphate + H(+). With respect to regulation, the first ATP-binding region has low ATPase activity. The second ATP-binding region is responsible for ATPase activity. ATP binding to the first ATP-binding region induces intrinsic activity of the second ATP-binding region. While ATP binding to the first ATP-binding region appears to prevent ATP hydrolysis by the second ATP-binding region, ADP-binding to first region promotes the coordinate and cooperative ATPase cycle of the second ATP-binding region. ATP binding to the first ATP-binding region induces a conformational change, promoting the rotation of the first ATP-binding region relative to the second ATP-binding region in the hexamer. Functionally, ATP-dependent chaperone which probably uses the energy provided by ATP hydrolysis to generate mechanical force to unfold substrate proteins, disassemble protein complexes, and disaggregate protein aggregates. By recruiting and promoting the degradation of ubiquitinated proteins, plays a role in the ubiquitin fusion degradation (UFD) pathway. Has a role in the endoplasmic reticulum-associated degradation (ERAD) pathway which mediates the cytoplasmic elimination of misfolded proteins exported from the ER. Required for the proteasome-dependent processing/activation of MGA2 and SPT23 transcription factors leading to the subsequent expression of OLE1. Has an additional role in the turnover of OLE1 where it targets ubiquitinated OLE1 and other proteins to the ERAD. Regulates ubiquitin-mediated mitochondria protein degradation. Involved in spindle disassembly probably by promoting the degradation of spindle assembly factors ASE1 and CDC5 at the end of mitosis. Component of the ribosome quality control complex (RQC), a ribosome-associated complex that mediates ubiquitination and extraction of incompletely synthesized nascent chains for proteasomal degradation. CDC48 may provide the mechanical force that dislodges the polyubiquitinated nascent peptides from the exit channel. Required for ribophagy, a process which relocalizes ribosomal particles into the vacuole for degradation in response to starvation. Component of the DSC E3 ubiquitin ligase complexes that tag proteins present in Golgi, endosome and vacuole membranes and function in protein homeostasis under non-stress conditions and support a role in protein quality control. Substrate initially binds through the attached polyubiquitin chain to UDF1/NPL4 and then moves through the pore of the ATPase rings and is thereby unfolded. Acts on a broad range of even well-folded proteins via ubiquitin-binding and unfolding to initiate substrate processing. Involved in degradation of mislocalized tail-anchored transmembrane proteins extracted from the mitochondrion outer membrane by MSP1 and ubiquitinated by DOA10. This chain is Cell division control protein 48, found in Saccharomyces cerevisiae (strain ATCC 204508 / S288c) (Baker's yeast).